Here is a 225-residue protein sequence, read N- to C-terminus: Sirohydrochlorin ferrochelatase, chloroplastic (225 aa).

The transit peptide at 1–46 directs the protein to the chloroplast; that stretch reads MTTQSQFLVNLSYGGLASQSNLRANNRVSPSSCQITRTNRSWALPV. Fe cation contacts are provided by H89 and H155. Positions 199, 210, 213, and 219 each coordinate [4Fe-4S] cluster.

Belongs to the CbiX family. SirB subfamily. As to quaternary structure, homodimer. [4Fe-4S] cluster is required as a cofactor.

Its subcellular location is the plastid. The protein localises to the chloroplast. It catalyses the reaction siroheme + 2 H(+) = sirohydrochlorin + Fe(2+). It participates in porphyrin-containing compound metabolism; siroheme biosynthesis; siroheme from sirohydrochlorin: step 1/1. Functionally, chelates iron to the siroheme precursor. Catalyzes the last step of the siroheme biosynthesis. Unlike its counterparts in bacteria, contains an [Fe-S] cluster which is not involved directly in the enzymatic reaction, but may play regulatory role in iron, sulfur and tetrapyrrole metabolism. The [Fe-S] cluster is required for normal plant growth. The polypeptide is Sirohydrochlorin ferrochelatase, chloroplastic (Arabidopsis thaliana (Mouse-ear cress)).